The sequence spans 265 residues: uncharacterized protein (265 aa).

CBS domains are found at residues 9 to 64 (MTKK…EKVE) and 67 to 126 (MTKR…TTPK).

This is an uncharacterized protein from Methanocaldococcus jannaschii (strain ATCC 43067 / DSM 2661 / JAL-1 / JCM 10045 / NBRC 100440) (Methanococcus jannaschii).